The sequence spans 553 residues: Chaperonin GroEL 2 (553 aa).

ATP-binding positions include 29-32 (TLGP), 86-90 (DGTTT), G414, and D495.

This sequence belongs to the chaperonin (HSP60) family. Forms a cylinder of 14 subunits composed of two heptameric rings stacked back-to-back. Interacts with the co-chaperonin GroES.

It localises to the cytoplasm. The enzyme catalyses ATP + H2O + a folded polypeptide = ADP + phosphate + an unfolded polypeptide.. In terms of biological role, together with its co-chaperonin GroES, plays an essential role in assisting protein folding. The GroEL-GroES system forms a nano-cage that allows encapsulation of the non-native substrate proteins and provides a physical environment optimized to promote and accelerate protein folding. The sequence is that of Chaperonin GroEL 2 from Gloeobacter violaceus (strain ATCC 29082 / PCC 7421).